The primary structure comprises 265 residues: Sulfur carrier protein FdhD (265 aa).

Cys107 (cysteine persulfide intermediate) is an active-site residue.

This sequence belongs to the FdhD family.

The protein localises to the cytoplasm. In terms of biological role, required for formate dehydrogenase (FDH) activity. Acts as a sulfur carrier protein that transfers sulfur from IscS to the molybdenum cofactor prior to its insertion into FDH. The protein is Sulfur carrier protein FdhD of Staphylococcus aureus (strain bovine RF122 / ET3-1).